Here is a 520-residue protein sequence, read N- to C-terminus: Genome polyprotein (520 aa).

Ser2 is modified (N-acetylserine; by host). Residues 2-23 are interaction with STAT1; sequence STNPKPQRKTKRNTNRRPQDVK. An interaction with EIF2AK2/PKR region spans residues 2-58; it reads STNPKPQRKTKRNTNRRPQDVKFPGGGQIVGGVYLLTRRGPRLGVRATRKTSERSQP. Positions 2-59 are interaction with DDX3X; it reads STNPKPQRKTKRNTNRRPQDVKFPGGGQIVGGVYLLTRRGPRLGVRATRKTSERSQPR. The interval 2-75 is disordered; it reads STNPKPQRKT…PKARRPEGRA (74 aa). At 2–168 the chain is on the cytoplasmic side; it reads STNPKPQRKT…EDGVNYATGN (167 aa). 2 short sequence motifs (nuclear localization signal) span residues 5 to 13 and 38 to 43; these read PKPQRKTKR and TRRGPR. Over residues 7 to 16 the composition is skewed to basic residues; that stretch reads PQRKTKRNTN. Phosphoserine; by host is present on Ser53. Short sequence motifs (nuclear localization signal) lie at residues 58–64 and 66–71; these read PRGRRQP and PKARRP. Positions 58 to 68 are enriched in basic residues; the sequence is PRGRRQPIPKA. Ser99 is modified (phosphoserine; by host). The tract at residues 112–152 is important for endoplasmic reticulum and mitochondrial localization; the sequence is PRRRSRNLGKVIDTLTCGFADLMGYIPLVGAPLGGASRALA. Residue Ser116 is modified to Phosphoserine; by host PKA. An interaction with APOA2 region spans residues 122-173; it reads VIDTLTCGFADLMGYIPLVGAPLGGASRALAHGVRVLEDGVNYATGNLPGCS. The tract at residues 164–167 is important for lipid droplets localization; it reads YATG. A helical transmembrane segment spans residues 169–189; the sequence is LPGCSFSIFLSALMSCLTTPA. Residues 178-191 constitute a propeptide, ER anchor for the core protein, removed in mature form by host signal peptidase; the sequence is LSALMSCLTTPASA. Residues 190-358 lie on the Lumenal side of the membrane; that stretch reads SAYEVRNVSG…AGAHWGVLAG (169 aa). Residues Asn196, Asn209, Asn234, and Asn250 are each glycosylated (N-linked (GlcNAc...) asparagine; by host). The interval 265–296 is important for fusion; it reads LVGAATLCSAMYVGDLCGSVFLVSQLFTFSPR. N-linked (GlcNAc...) asparagine; by host glycosylation is present at Asn305. Residues 359–379 traverse the membrane as a helical segment; sequence LAYYSMVGNWAKVLIVMLLFA. The Lumenal segment spans residues 380–520; it reads GVDGANTHTV…TPSPVVVGTT (141 aa). The tract at residues 385–411 is HVR1; it reads NTHTVGGTEGFATQRLTSLFALGPSQK. Residue Asn418 is glycosylated (N-linked (GlcNAc...) asparagine; by host). Residues Asn424, Asn431, and Asn449 are each glycosylated (N-linked (GlcNAc...) (high mannose) asparagine; by host). Cysteines 453 and 460 form a disulfide. The tract at residues 474-479 is HVR2; sequence TYAEPS. Residues 480–493 are CD81-binding 1; that stretch reads ISEQRPYCWHYAPR. 2 cysteine pairs are disulfide-bonded: Cys487-Cys495 and Cys504-Cys509.

The protein belongs to the hepacivirus polyprotein family. Homooligomer. Interacts with E1 (via C-terminus). Interacts with the non-structural protein 5A. Interacts (via N-terminus) with host STAT1 (via SH2 domain); this interaction results in decreased STAT1 phosphorylation and ubiquitin-mediated proteasome-dependent STAT1 degradation, leading to decreased IFN-stimulated gene transcription. Interacts with host STAT3; this interaction constitutively activates STAT3. Interacts with host LTBR receptor. Interacts with host TNFRSF1A receptor and possibly induces apoptosis. Interacts with host HNRPK. Interacts with host YWHAE. Interacts with host UBE3A/E6AP. Interacts with host DDX3X. Interacts with host APOA2. Interacts with host RXRA protein. Interacts with host SP110 isoform 3/Sp110b; this interaction sequesters the transcriptional corepressor SP110 away from the nucleus. Interacts with host CREB3 nuclear transcription protein; this interaction triggers cell transformation. Interacts with host ACY3. Interacts with host C1QR1. Interacts with host RBM24; this interaction, which enhances the interaction of the mature core protein with 5'-UTR, may inhibit viral translation and favor replication. Interacts with host EIF2AK2/PKR; this interaction induces the autophosphorylation of EIF2AK2. Part of the viral assembly initiation complex composed of NS2, E1, E2, NS3, NS4A, NS5A and the mature core protein. In terms of assembly, forms a heterodimer with envelope glycoprotein E2. Interacts with mature core protein. Interacts with protease NS2. The heterodimer E1/E2 interacts with host CLDN1; this interaction plays a role in viral entry into host cell. Interacts with host SPSB2 (via C-terminus). Part of the viral assembly initiation complex composed of NS2, E1, E2, NS3, NS4A, NS5A and the mature core protein. As to quaternary structure, forms a heterodimer with envelope glycoprotein E1. Interacts with host CD81 and SCARB1 receptors; these interactions play a role in viral entry into host cell. Interacts with host EIF2AK2/PKR; this interaction inhibits EIF2AK2 and probably allows the virus to evade the innate immune response. Interacts with host CD209/DC-SIGN and CLEC4M/DC-SIGNR. Interact with host SPCS1; this interaction is essential for viral particle assembly. Interacts with protease NS2. The heterodimer E1/E2 interacts with host CLDN1; this interaction plays a role in viral entry into host cell. Part of the viral assembly initiation complex composed of NS2, E1, E2, NS3, NS4A, NS5A and the mature core protein. Post-translationally, specific enzymatic cleavages in vivo yield mature proteins. The structural proteins, core, E1, E2 and p7 are produced by proteolytic processing by host signal peptidases. The core protein precursor is synthesized as a 23 kDa, which is retained in the ER membrane through the hydrophobic signal peptide. Cleavage by the signal peptidase releases the 21 kDa mature core protein. The cleavage of the core protein precursor occurs between aminoacids 176 and 188 but the exact cleavage site is not known. Some degraded forms of the core protein appear as well during the course of infection. The other proteins (p7, NS2, NS3, NS4A, NS4B, NS5A and NS5B) are cleaved by the viral proteases. Autoprocessing between NS2 and NS3 is mediated by the NS2 cysteine protease catalytic domain and regulated by the NS3 N-terminal domain. Phosphorylated by host PKC and PKA. In terms of processing, ubiquitinated; mediated by UBE3A and leading to core protein subsequent proteasomal degradation. Post-translationally, highly N-glycosylated.

It localises to the host endoplasmic reticulum membrane. The protein resides in the host mitochondrion membrane. It is found in the virion. Its subcellular location is the host cytoplasm. The protein localises to the host nucleus. It localises to the host lipid droplet. The protein resides in the virion membrane. Functionally, packages viral RNA to form a viral nucleocapsid, and promotes virion budding. Participates in the viral particle production as a result of its interaction with the non-structural protein 5A. Binds RNA and may function as a RNA chaperone to induce the RNA structural rearrangements taking place during virus replication. Modulates viral translation initiation by interacting with viral IRES and 40S ribosomal subunit. Affects various cell signaling pathways, host immunity and lipid metabolism. Prevents the establishment of cellular antiviral state by blocking the interferon-alpha/beta (IFN-alpha/beta) and IFN-gamma signaling pathways and by blocking the formation of phosphorylated STAT1 and promoting ubiquitin-mediated proteasome-dependent degradation of STAT1. Activates STAT3 leading to cellular transformation. Regulates the activity of cellular genes, including c-myc and c-fos. May repress the promoter of p53, and sequester CREB3 and SP110 isoform 3/Sp110b in the cytoplasm. Represses cell cycle negative regulating factor CDKN1A, thereby interrupting an important check point of normal cell cycle regulation. Targets transcription factors involved in the regulation of inflammatory responses and in the immune response: suppresses TNF-induced NF-kappa-B activation, and activates AP-1. Binds to dendritic cells (DCs) via C1QR1, resulting in down-regulation of T-lymphocytes proliferation. Alters lipid metabolism by interacting with hepatocellular proteins involved in lipid accumulation and storage. Induces up-regulation of FAS promoter activity, and thereby contributes to the increased triglyceride accumulation in hepatocytes (steatosis). In terms of biological role, forms a heterodimer with envelope glycoprotein E2, which mediates virus attachment to the host cell, virion internalization through clathrin-dependent endocytosis and fusion with host membrane. Fusion with the host cell is most likely mediated by both E1 and E2, through conformational rearrangements of the heterodimer required for fusion rather than a classical class II fusion mechanism. E1/E2 heterodimer binds host apolipoproteins such as APOB and ApoE thereby forming a lipo-viro-particle (LVP). APOE associated to the LVP allows the initial virus attachment to cell surface receptors such as the heparan sulfate proteoglycans (HSPGs), syndecan-1 (SDC1), syndecan-1 (SDC2), the low-density lipoprotein receptor (LDLR) and scavenger receptor class B type I (SCARB1). The cholesterol transfer activity of SCARB1 allows E2 exposure and binding of E2 to SCARB1 and the tetraspanin CD81. E1/E2 heterodimer binding on CD81 activates the epithelial growth factor receptor (EGFR) signaling pathway. Diffusion of the complex E1-E2-EGFR-SCARB1-CD81 to the cell lateral membrane allows further interaction with Claudin 1 (CLDN1) and occludin (OCLN) to finally trigger HCV entry. Its function is as follows. Forms a heterodimer with envelope glycoprotein E1, which mediates virus attachment to the host cell, virion internalization through clathrin-dependent endocytosis and fusion with host membrane. Fusion with the host cell is most likely mediated by both E1 and E2, through conformational rearrangements of the heterodimer required for fusion rather than a classical class II fusion mechanism. The interaction between envelope glycoprotein E2 and host apolipoprotein E/APOE allows the proper assembly, maturation and infectivity of the viral particles. This interaction is probably promoted via the up-regulation of cellular autophagy by the virus. E1/E2 heterodimer binds host apolipoproteins such as APOB and APOE thereby forming a lipo-viro-particle (LVP). APOE associated to the LVP allows the initial virus attachment to cell surface receptors such as the heparan sulfate proteoglycans (HSPGs), syndecan-1 (SDC1), syndecan-1 (SDC2), the low-density lipoprotein receptor (LDLR) and scavenger receptor class B type I (SCARB1). The cholesterol transfer activity of SCARB1 allows E2 exposure and binding of E2 to SCARB1 and the tetraspanin CD81. E1/E2 heterodimer binding on CD81 activates the epithelial growth factor receptor (EGFR) signaling pathway. Diffusion of the complex E1-E2-EGFR-SCARB1-CD81 to the cell lateral membrane allows further interaction with Claudin 1 (CLDN1) and occludin (OCLN) to finally trigger HCV entry. Inhibits host EIF2AK2/PKR activation, preventing the establishment of an antiviral state. Viral ligand for CD209/DC-SIGN and CLEC4M/DC-SIGNR, which are respectively found on dendritic cells (DCs), and on liver sinusoidal endothelial cells and macrophage-like cells of lymph node sinuses. These interactions allow the capture of circulating HCV particles by these cells and subsequent facilitated transmission to permissive cells such as hepatocytes and lymphocyte subpopulations. This Hepatitis C virus (isolate HCV-KF) (HCV) protein is Genome polyprotein.